The chain runs to 952 residues: Meiosis-specific coiled-coil domain-containing protein MEIOC (952 aa).

3 disordered regions span residues 1 to 23, 609 to 629, and 933 to 952; these read MEVR…EGLE, QAKP…LDGL, and VHES…TNKH. Residues 617–627 show a composition bias toward basic and acidic residues; the sequence is YDPEEGPKHLD. The segment covering 936–952 has biased composition (polar residues); sequence SINSSNPMNQRGETNKH.

In terms of assembly, interacts with YTHDC2; binds transcript that regulate the mitotic cell cycle inhibiting progression into metaphase, thereby allowing meiotic prophase to proceed normally. Interacts with RBM46. Expressed in fetal ovaries. Expressed in testis.

The protein resides in the cytoplasm. It localises to the nucleus. Is required for meiosis completion in both male and female germ cells. Confers stability to numerous meiotic mRNAs in gonads allowing proper initiation and progression into meiosis prophase I. The function may involve YTHDC2 and is independent of induction by retinoic acid (RA). Maintains an extended meiotic prophase I by properly promoting the transition from a mitotic to a meiotic cell cycle program by binding transcripts through its interaction with YTHDC2 that regulate the mitotic cell cycle. This chain is Meiosis-specific coiled-coil domain-containing protein MEIOC, found in Homo sapiens (Human).